We begin with the raw amino-acid sequence, 1038 residues long: GTPase-activating Rap/Ran-GAP domain-like protein 3 (1038 aa).

2 positions are modified to phosphoserine: Lys6 and Ser68. The 217-residue stretch at 214-430 (LLVLEEQEGS…RTLDMLIRSL (217 aa)) folds into the Rap-GAP domain. 2 positions are modified to phosphoserine: Ser449 and Ser455. The CNH domain occupies 512–824 (PHEAVCADPW…QLVASRSDIY (313 aa)). 2 disordered regions span residues 833-863 (EGSS…FPSS) and 937-1038 (LLGL…IDLK). Thr851 carries the post-translational modification Phosphothreonine. Polar residues predominate over residues 1019-1028 (SGSSPFQLMA).

Belongs to the GARNL3 family.

This is GTPase-activating Rap/Ran-GAP domain-like protein 3 (Garnl3) from Mus musculus (Mouse).